A 739-amino-acid chain; its full sequence is Adenosylcobalamin-dependent ribonucleoside-triphosphate reductase (739 aa).

The cysteines at positions 119 and 419 are disulfide-linked. Residues 147 to 158 (SMPFSFLFDELM) form an effector region-1 region. The interval 168–313 (ARSNISQIPR…ICNLIGKAVV (146 aa)) is effector region-2. Catalysis depends on residues cysteine 408 and glutamate 410. The adenosylcobalamin-binding-1 stretch occupies residues 565-626 (FHYGAYLIQR…NPNFASAGTV (62 aa)). An adenosylcobalamin-binding-2 region spans residues 685–724 (LQQAPKEPIDKETYEKRSQEITGNVEEVFSQLNSDVKDLE).

Belongs to the class II ribonucleoside-triphosphate reductase family. Monomer. Requires adenosylcob(III)alamin as cofactor.

The enzyme catalyses a 2'-deoxyribonucleoside 5'-triphosphate + [thioredoxin]-disulfide + H2O = a ribonucleoside 5'-triphosphate + [thioredoxin]-dithiol. Its activity is regulated as follows. Allosterically regulated by ATP and dNTP. This is Adenosylcobalamin-dependent ribonucleoside-triphosphate reductase (rtpR) from Lactobacillus leichmannii.